The primary structure comprises 159 residues: Phosphopantetheine adenylyltransferase (159 aa).

Residue Thr-9 participates in substrate binding. ATP-binding positions include 9-10 (TF) and His-17. Substrate is bound by residues Lys-41, Leu-73, and Arg-87. ATP-binding positions include 88–90 (GLR), Glu-98, and 123–129 (YSFISST).

It belongs to the bacterial CoaD family. In terms of assembly, homohexamer. Mg(2+) is required as a cofactor.

The protein resides in the cytoplasm. The enzyme catalyses (R)-4'-phosphopantetheine + ATP + H(+) = 3'-dephospho-CoA + diphosphate. It participates in cofactor biosynthesis; coenzyme A biosynthesis; CoA from (R)-pantothenate: step 4/5. Its function is as follows. Reversibly transfers an adenylyl group from ATP to 4'-phosphopantetheine, yielding dephospho-CoA (dPCoA) and pyrophosphate. This chain is Phosphopantetheine adenylyltransferase, found in Pseudomonas syringae pv. syringae (strain B728a).